We begin with the raw amino-acid sequence, 61 residues long: Large ribosomal subunit protein uL30 (61 aa).

Belongs to the universal ribosomal protein uL30 family. In terms of assembly, part of the 50S ribosomal subunit.

The sequence is that of Large ribosomal subunit protein uL30 from Lacticaseibacillus casei (strain BL23) (Lactobacillus casei).